Reading from the N-terminus, the 704-residue chain is ATP-dependent zinc metalloprotease FTSH 5, chloroplastic (704 aa).

A chloroplast-targeting transit peptide spans 1–58 (MATTSSNPLLLSSNFLGSQIIISAPTPKTTTKSLPFSVISRKRYQISQSEKLMKSLPS). The N-terminal 18 residues, 59–76 (QAALAALLFSSSSPQALA), are a transit peptide targeting the thylakoid. Residues 193–213 (FDFIGNLLFPLLAFGGLFYLF) form a helical membrane-spanning segment. 290 to 297 (GPPGTGKT) contributes to the ATP binding site. H512 is a Zn(2+) binding site. E513 is an active-site residue. Zn(2+) is bound by residues H516 and D593.

This sequence in the N-terminal section; belongs to the AAA ATPase family. The protein in the C-terminal section; belongs to the peptidase M41 family. As to quaternary structure, heterohexamers with FTSH1, FTSH2 and FTSH8. The cofactor is Zn(2+). In terms of tissue distribution, ubiquitous.

It localises to the plastid. Its subcellular location is the chloroplast thylakoid membrane. In terms of biological role, part of a complex that function as an ATP-dependent zinc metallopeptidase. Involved in the thylakoid formation and in the removal of damaged D1 in the photosystem II, preventing cell death under high-intensity light conditions. Not involved in the degradation of the light-harvesting complex of photosystem II (LHC II) or in thermotolerance. The polypeptide is ATP-dependent zinc metalloprotease FTSH 5, chloroplastic (FTSH5) (Arabidopsis thaliana (Mouse-ear cress)).